Here is a 333-residue protein sequence, read N- to C-terminus: Acyl-CoA wax alcohol acyltransferase 2 (333 aa).

3 helical membrane-spanning segments follow: residues 15-35, 38-58, and 130-150; these read VFAL…VIIV, YLVV…WLAF, and TFPG…VPFL.

Belongs to the diacylglycerol acyltransferase family. As to quaternary structure, monomer. In terms of tissue distribution, expressed in Mueller cells of the retina (at protein level). Abundant in tissues rich in sebaceous glands such as the preputial gland and eyelid.

It is found in the endoplasmic reticulum membrane. It catalyses the reaction a long chain fatty alcohol + a fatty acyl-CoA = a wax ester + CoA. The catalysed reaction is all-trans-retinol + an acyl-CoA = an all-trans-retinyl ester + CoA. The enzyme catalyses an acyl-CoA + a 1,2-diacyl-sn-glycerol = a triacyl-sn-glycerol + CoA. It carries out the reaction 9-cis-retinol + a fatty acyl-CoA = 9-cis-retinyl ester + CoA. It catalyses the reaction 11-cis-retinol + a fatty acyl-CoA = 11-cis-retinyl ester + CoA. The catalysed reaction is 13-cis-retinol + a fatty acyl-CoA = 13-cis-retinyl ester + CoA. The enzyme catalyses a 1-acylglycerol + an acyl-CoA = a 1,2-diacylglycerol + CoA. It carries out the reaction 1-O-alkylglycerol + an acyl-CoA = 1-O-alkyl-3-acylglycerol + CoA. It catalyses the reaction a 2-acylglycerol + an acyl-CoA = a 1,2-diacyl-sn-glycerol + CoA. The catalysed reaction is 2-(9Z-octadecenoyl)-glycerol + hexadecanoyl-CoA = 1-hexadecanoyl-2-(9Z-octadecenoyl)-sn-glycerol + CoA. The enzyme catalyses 1,2-di-(9Z-octadecenoyl)-sn-glycerol + hexadecanoyl-CoA = 1,2-di-(9Z)-octadecenoyl-3-hexadecanoyl-sn-glycerol + CoA. It carries out the reaction hexadecan-1-ol + hexadecanoyl-CoA = hexadecanyl hexadecanoate + CoA. It catalyses the reaction hexadecane-1,2-diol + hexadecanoyl-CoA = 2-hydroxyhexadecyl hexadecanoate + CoA. The catalysed reaction is all-trans-retinol + hexadecanoyl-CoA = all-trans-retinyl hexadecanoate + CoA. The enzyme catalyses 1,2-di-(9Z-octadecenoyl)-sn-glycerol + (9Z)-octadecenoyl-CoA = 1,2,3-tri-(9Z-octadecenoyl)-glycerol + CoA. It carries out the reaction hexadecan-1-ol + (9Z)-octadecenoyl-CoA = hexadecanyl (9Z)-octadecenoate + CoA. It catalyses the reaction (9Z)-hexadecen-1-ol + (9Z)-octadecenoyl-CoA = 1-O-(9Z)-hexadecenyl (9Z)-octadecenoate + CoA. The catalysed reaction is octadecan-1-ol + (9Z)-octadecenoyl-CoA = 1-O-octadecyl (9Z)-octadecenoate + CoA. The enzyme catalyses (9Z)-octadecen-1-ol + (9Z)-octadecenoyl-CoA = 1-O-(9Z)-octadecenyl (9Z)-octadecenoate + CoA. It carries out the reaction hexadecan-1-ol + (9Z)-hexadecenoyl-CoA = 1-O-hexadecyl (9Z)-hexadecenoate + CoA. It catalyses the reaction hexadecan-1-ol + octadecanoyl-CoA = hexadecanyl octadecanoate + CoA. The catalysed reaction is 11-cis-retinol + hexadecanoyl-CoA = 11-cis-retinyl hexadecanoate + CoA. The enzyme catalyses 1-O-(9Z-octadecenyl)-glycerol + (9Z)-octadecenoyl-CoA = 1-O-(9Z-octadecyl)-3-(9Z-octadecenoyl)-glycerol + CoA. It carries out the reaction 1-(9Z-octadecenoyl)-glycerol + (9Z)-octadecenoyl-CoA = 1,2-di-(9Z-octadecenoyl)-glycerol + CoA. It catalyses the reaction 11-cis-retinol + tetradecanoyl-CoA = 11-cis-retinyl tetradecanoate + CoA. The catalysed reaction is 9-cis-retinol + tetradecanoyl-CoA = 9-cis-retinyl tetradecanoate + CoA. The enzyme catalyses 9-cis-retinol + hexadecanoyl-CoA = 9-cis-retinyl hexadecanoate + CoA. It carries out the reaction 13-cis-retinol + tetradecanoyl-CoA = 13-cis-retinyl tetradecanoate + CoA. It catalyses the reaction all-trans-retinol + tetradecanoyl-CoA = all-trans-retinyl tetradecanoate + CoA. The catalysed reaction is tetradecan-1-ol + tetradecanoyl-CoA = tetradecanyl tetradecanoate + CoA. 11-cis retinoids act as allosteric modulators of acyl-CoA retinol O-fatty-acyltransferase (ARAT) activity by suppressing esterification of 9-cis, 13-cis, or all-trans retinols concurrently increasing the enzyme specificity toward 11-cis isomer. In terms of biological role, acyltransferase that catalyzes the formation of ester bonds between fatty alcohols and fatty acyl-CoAs to form wax monoesters. Shows a preference for medium chain acyl-CoAs from C12 to C16 in length and fatty alcohols shorter than C20, as the acyl donor and acceptor, respectively. Also possesses fatty acyl-CoA retinol acyltransferase (ARAT) activity that preferentially esterifies 11-cis-retinol, a chromophore precursor of bleached opsin pigments in cone cells. Shows higher catalytic efficiency toward 11-cis-retinol versus 9-cis-retinol, 13- cis-retinol and all-trans-retinol substrates. This chain is Acyl-CoA wax alcohol acyltransferase 2 (Awat2), found in Mus musculus (Mouse).